The primary structure comprises 369 residues: Methionine import ATP-binding protein MetN 1 (369 aa).

The region spanning 29–265 (IRLHGLGKRY…PRHAVTRSLL (237 aa)) is the ABC transporter domain. 62 to 69 (GRSGAGKS) is an ATP binding site.

It belongs to the ABC transporter superfamily. Methionine importer (TC 3.A.1.24) family. The complex is composed of two ATP-binding proteins (MetN), two transmembrane proteins (MetI) and a solute-binding protein (MetQ).

The protein localises to the cell inner membrane. It catalyses the reaction L-methionine(out) + ATP + H2O = L-methionine(in) + ADP + phosphate + H(+). It carries out the reaction D-methionine(out) + ATP + H2O = D-methionine(in) + ADP + phosphate + H(+). Functionally, part of the ABC transporter complex MetNIQ involved in methionine import. Responsible for energy coupling to the transport system. The sequence is that of Methionine import ATP-binding protein MetN 1 from Pseudomonas aeruginosa (strain ATCC 15692 / DSM 22644 / CIP 104116 / JCM 14847 / LMG 12228 / 1C / PRS 101 / PAO1).